Here is a 1235-residue protein sequence, read N- to C-terminus: Major DNA-binding protein (1235 aa).

The segment at 536 to 584 is disordered; the sequence is GGLDGKGDDGVPGGGAGGGGGRDVSGGPSDGLGGGRGGGGGGDSGGMMG. Gly residues predominate over residues 545-584; it reads GVPGGGAGGGGGRDVSGGPSDGLGGGRGGGGGGDSGGMMG. A Required for filament formation motif is present at residues 846–847; sequence FW. The span at 1214–1226 shows a compositional bias: gly residues; it reads GVGGSSGGGGGSG. Residues 1214–1235 are disordered; it reads GVGGSSGGGGGSGLLPAKRSRL. The interval 1232 to 1235 is required for nuclear localization; the sequence is RSRL.

The protein belongs to the herpesviridae major DNA-binding protein family. In terms of assembly, homooligomers. Forms double-helical filaments necessary for the formation of replication compartments within the host nucleus. Interacts with the origin-binding protein. Interacts with the helicase primase complex; this interaction stimulates primer synthesis activity of the helicase-primase complex. Interacts with the DNA polymerase. Interacts with the alkaline exonuclease; this interaction increases its nuclease processivity.

It is found in the host nucleus. Plays several crucial roles in viral infection. Participates in the opening of the viral DNA origin to initiate replication by interacting with the origin-binding protein. May disrupt loops, hairpins and other secondary structures present on ssDNA to reduce and eliminate pausing of viral DNA polymerase at specific sites during elongation. Promotes viral DNA recombination by performing strand-transfer, characterized by the ability to transfer a DNA strand from a linear duplex to a complementary single-stranded DNA circle. Can also catalyze the renaturation of complementary single strands. Additionally, reorganizes the host cell nucleus, leading to the formation of prereplicative sites and replication compartments. This process is driven by the protein which can form double-helical filaments in the absence of DNA. The polypeptide is Major DNA-binding protein (Homo sapiens (Human)).